The following is a 503-amino-acid chain: Putative FBD-associated F-box protein At5g56410 (503 aa).

An F-box domain is found at 2–50 (DKITGFSDDELLVKILSFLPTKAAVTTSILSKQWKFLWMRLPKLEYHDD). Residues 361–412 (FWEQMITSVPQCLLSSLQTFKWLGNGDSIEGKDLATFILRNSCQLKTATISI) form the FBD domain.

This Arabidopsis thaliana (Mouse-ear cress) protein is Putative FBD-associated F-box protein At5g56410.